The primary structure comprises 230 residues: 2,3-bisphosphoglycerate-dependent phosphoglycerate mutase (230 aa).

Substrate-binding positions include 8-15, 21-22, Arg60, 87-90, Lys98, 114-115, and 183-184; these read RHGESEWN, TG, ERHY, RR, and GN. His9 (tele-phosphohistidine intermediate) is an active-site residue. Glu87 (proton donor/acceptor) is an active-site residue.

Belongs to the phosphoglycerate mutase family. BPG-dependent PGAM subfamily.

The catalysed reaction is (2R)-2-phosphoglycerate = (2R)-3-phosphoglycerate. Its pathway is carbohydrate degradation; glycolysis; pyruvate from D-glyceraldehyde 3-phosphate: step 3/5. Catalyzes the interconversion of 2-phosphoglycerate and 3-phosphoglycerate. This chain is 2,3-bisphosphoglycerate-dependent phosphoglycerate mutase, found in Streptococcus gordonii (strain Challis / ATCC 35105 / BCRC 15272 / CH1 / DL1 / V288).